The sequence spans 255 residues: MPPASDAHAAPDAAASTSASPQSCAAPPDTLPVTVRWLGETPYDACFDAMRAFTDARTPDTGDEIWVVEHPPVYTLGQAGNPAHLLVADSGVPLVKVDRGGQITYHGPGQIVAYLLIDLRRRKLMVRTLVTRIEQAVIETLAAYNLASVRKAGAPGIYVESGPHHGAKIAALGLKIRNGCSYHGLSVNVKMDLRPFLAINPCGYAGLETVDMASLGATADWHEVARTLVRRLIANLDGATAAAALPQQALEQSND.

Positions 1 to 27 (MPPASDAHAAPDAAASTSASPQSCAAP) are disordered. The BPL/LPL catalytic domain maps to 59–240 (PDTGDEIWVV…RLIANLDGAT (182 aa)). Residues 99–106 (RGGQITYH), 171–173 (ALG), and 184–186 (GLS) contribute to the substrate site. C202 serves as the catalytic Acyl-thioester intermediate.

The protein belongs to the LipB family.

It is found in the cytoplasm. The enzyme catalyses octanoyl-[ACP] + L-lysyl-[protein] = N(6)-octanoyl-L-lysyl-[protein] + holo-[ACP] + H(+). It functions in the pathway protein modification; protein lipoylation via endogenous pathway; protein N(6)-(lipoyl)lysine from octanoyl-[acyl-carrier-protein]: step 1/2. Its function is as follows. Catalyzes the transfer of endogenously produced octanoic acid from octanoyl-acyl-carrier-protein onto the lipoyl domains of lipoate-dependent enzymes. Lipoyl-ACP can also act as a substrate although octanoyl-ACP is likely to be the physiological substrate. The sequence is that of Octanoyltransferase from Burkholderia thailandensis (strain ATCC 700388 / DSM 13276 / CCUG 48851 / CIP 106301 / E264).